Consider the following 314-residue polypeptide: Acetaldehyde dehydrogenase 1/2 (314 aa).

An NAD(+)-binding site is contributed by 12–15; the sequence is SGNI. Catalysis depends on Cys-130, which acts as the Acyl-thioester intermediate. NAD(+) is bound by residues 161–169 and Asn-288; that span reads SAGPGTRAN.

The protein belongs to the acetaldehyde dehydrogenase family.

It catalyses the reaction acetaldehyde + NAD(+) + CoA = acetyl-CoA + NADH + H(+). The chain is Acetaldehyde dehydrogenase 1/2 from Rhizorhabdus wittichii (strain DSM 6014 / CCUG 31198 / JCM 15750 / NBRC 105917 / EY 4224 / RW1) (Sphingomonas wittichii).